The following is a 423-amino-acid chain: MALASGPARRALAGSGQLGLGGFGAPRRGAYEWGVRSTRKSEPPPLDRVYEIPGLEPITFAGKMHFVPWLARPIFPPWDRGYKDPRFYRSPPLHEHPLYKDQACYIFHHRCRLLEGVKQALWLTKTKLIEGLPEKVLSLVDDPRNHIENQDECVLNVISHARLWQTTEEIPKRETYCPVIVDNLIQLCKSQILKHPSLARRICVQNSTFSATWNRESLLLQVRGSGGARLSTKDPLPTIASREEIEATKNHVLETFYPISPIIDLHECNIYDVKNDTGFQEGYPYPYPHTLYLLDKANLRPHRLQPDQLRAKMILFAFGSALAQARLLYGNDAKVLEQPVVVQSVGTDGRVFHFLVFQLNTTDLDCNEGVKNLAWVDSDQLLYQHFWCLPVIKKRVVVEPVGPVGFKPETFRKFLALYLHGAA.

The N-terminal 29 residues, 1–29 (MALASGPARRALAGSGQLGLGGFGAPRRG), are a transit peptide targeting the mitochondrion.

Belongs to the mitochondrion-specific ribosomal protein mL37 family. As to quaternary structure, component of the mitochondrial large ribosomal subunit (mt-LSU). Mature mammalian 55S mitochondrial ribosomes consist of a small (28S) and a large (39S) subunit. The 28S small subunit contains a 12S ribosomal RNA (12S mt-rRNA) and 30 different proteins. The 39S large subunit contains a 16S rRNA (16S mt-rRNA), a copy of mitochondrial valine transfer RNA (mt-tRNA(Val)), which plays an integral structural role, and 52 different proteins. mL37 forms a heterodimer with mL65.

The protein localises to the mitochondrion. This Homo sapiens (Human) protein is Large ribosomal subunit protein mL37 (MRPL37).